The chain runs to 641 residues: Anthrax toxin receptor-like (641 aa).

A signal peptide spans 1 to 27 (MMSHSPSMPCSALFLLLLLLLPPTFKG). Over 28-363 (GSLRYHGPGW…ASQGIVFKRT (336 aa)) the chain is Extracellular. A VWFA domain is found at 76 to 247 (DLYLVLDKSG…SALEGVVDPL (172 aa)). Ser84, Ser86, and Thr150 together coordinate a divalent metal cation. Residues 364-384 (WLMFLPVLLVTLLLLCCTWKL) form a helical membrane-spanning segment. Over 385–641 (CIKPKKLPPP…FPPISKGPKF (257 aa)) the chain is Cytoplasmic. Residues 391-455 (LPPPPPKPEK…ARPPPAPLPA (65 aa)) are disordered. The span at 407–436 (PPPSSPPAPGRGPGPGPSAGPGPGPGPSPG) shows a compositional bias: pro residues.

It belongs to the ATR family.

It is found in the membrane. This is Anthrax toxin receptor-like (Antxrl) from Mus musculus (Mouse).